We begin with the raw amino-acid sequence, 547 residues long: Probable acetolactate synthase (547 aa).

Glu57 contacts thiamine diphosphate. Residues Pro159 and 299–318 each bind FAD; that span reads DRVE…LYGD. Positions 388–468 are thiamine pyrophosphate binding; sequence DFGSYAGRMI…VVSVIGNNGI (81 aa). 2 residues coordinate Mg(2+): Asp439 and Asn466.

Belongs to the TPP enzyme family. Mg(2+) is required as a cofactor. The cofactor is thiamine diphosphate.

It carries out the reaction 2 pyruvate + H(+) = (2S)-2-acetolactate + CO2. Its pathway is amino-acid biosynthesis; L-isoleucine biosynthesis; L-isoleucine from 2-oxobutanoate: step 1/4. It participates in amino-acid biosynthesis; L-valine biosynthesis; L-valine from pyruvate: step 1/4. The sequence is that of Probable acetolactate synthase (ilvG) from Mycobacterium bovis (strain ATCC BAA-935 / AF2122/97).